We begin with the raw amino-acid sequence, 210 residues long: Large ribosomal subunit protein uL4 (210 aa).

Polar residues predominate over residues 44-54 (KRQGTASTLTR). The tract at residues 44–85 (KRQGTASTLTRSEVRGGGRKPYKQKGTGRARQGSIRTPLRPG) is disordered. The segment covering 60 to 71 (GGRKPYKQKGTG) has biased composition (basic residues).

Belongs to the universal ribosomal protein uL4 family. In terms of assembly, part of the 50S ribosomal subunit.

One of the primary rRNA binding proteins, this protein initially binds near the 5'-end of the 23S rRNA. It is important during the early stages of 50S assembly. It makes multiple contacts with different domains of the 23S rRNA in the assembled 50S subunit and ribosome. Its function is as follows. Forms part of the polypeptide exit tunnel. The chain is Large ribosomal subunit protein uL4 from Prochlorococcus marinus (strain MIT 9301).